The chain runs to 330 residues: 1,8-cineole synthase (330 aa).

Residue Asp-81 participates in Mg(2+) binding. A DDXXD motif motif is present at residues Asp-81 to Asp-85. Residue Arg-174 coordinates substrate. Mg(2+) is bound by residues Asn-220 and Ser-224. Residues Asn-220–Glu-228 carry the NXXXSXXXE motif motif. Lys-227 contributes to the substrate binding site. A Mg(2+)-binding site is contributed by Glu-228. Substrate is bound at residue Arg-314 to Tyr-315.

This sequence belongs to the terpene synthase family. Homodimer. It depends on Mg(2+) as a cofactor.

The catalysed reaction is (2E)-geranyl diphosphate + H2O = 1,8-cineole + diphosphate. It carries out the reaction neryl diphosphate + H2O = 1,8-cineole + diphosphate. In vitro, catalyzes the formation of 1,8-cineole from geranyl diphosphate (GPP). Can also accept neryl diphosphate (NPP) as substrate to produce 1,8-cineole. In Streptomyces clavuligerus, this protein is 1,8-cineole synthase.